We begin with the raw amino-acid sequence, 137 residues long: Flagellar basal body rod protein FlgB (137 aa).

The protein belongs to the flagella basal body rod proteins family. The basal body constitutes a major portion of the flagellar organelle and consists of a number of rings mounted on a central rod. In Gram-negative bacteria, at least four rings, L, P, S and M are present, whereas Gram-positive bacteria lack the L and P rings. The rod consists of about 26 subunits of FlgG in the distal portion, and FlgB, FlgC and FlgF build up the proximal portion of the rod with about 6 subunits each. Rod assembly occurs by export via the flagellum-specific pathway of its constituent proteins and by their incorporation into the rod structure in the probable order of FlgB, FlgC, FlgF and FlgG. Another protein, FliE, also assembles onto the stable rod structure.

Its subcellular location is the bacterial flagellum basal body. In terms of biological role, structural component of flagellum, the bacterial motility apparatus. Part of the rod structure of flagellar basal body. This is Flagellar basal body rod protein FlgB from Proteus mirabilis (strain HI4320).